A 30-amino-acid polypeptide reads, in one-letter code: uncharacterized protein (30 aa).

This is an uncharacterized protein from Dictyostelium discoideum (Social amoeba).